A 20-amino-acid chain; its full sequence is Pregnancy-associated glycoprotein 57 (20 aa).

The protein belongs to the peptidase A1 family. Glycosylated.

The protein localises to the secreted. In Ovis aries (Sheep), this protein is Pregnancy-associated glycoprotein 57.